The following is a 384-amino-acid chain: S-adenosylmethionine synthase (384 aa).

His-16 provides a ligand contact to ATP. Residue Asp-18 coordinates Mg(2+). A K(+)-binding site is contributed by Glu-44. 2 residues coordinate L-methionine: Glu-57 and Gln-100. The segment at 100–110 (QSADIAMGVDE) is flexible loop. Residues 165–167 (DAK), Asp-240, 246–247 (RK), Ala-263, and Lys-267 each bind ATP. Asp-240 provides a ligand contact to L-methionine. Lys-271 provides a ligand contact to L-methionine.

The protein belongs to the AdoMet synthase family. Homotetramer; dimer of dimers. Requires Mg(2+) as cofactor. K(+) is required as a cofactor.

It is found in the cytoplasm. The enzyme catalyses L-methionine + ATP + H2O = S-adenosyl-L-methionine + phosphate + diphosphate. Its pathway is amino-acid biosynthesis; S-adenosyl-L-methionine biosynthesis; S-adenosyl-L-methionine from L-methionine: step 1/1. Its function is as follows. Catalyzes the formation of S-adenosylmethionine (AdoMet) from methionine and ATP. The overall synthetic reaction is composed of two sequential steps, AdoMet formation and the subsequent tripolyphosphate hydrolysis which occurs prior to release of AdoMet from the enzyme. The sequence is that of S-adenosylmethionine synthase from Cellvibrio japonicus (strain Ueda107) (Pseudomonas fluorescens subsp. cellulosa).